We begin with the raw amino-acid sequence, 226 residues long: ATP synthase F(0) complex subunit a (226 aa).

6 helical membrane-spanning segments follow: residues 6 to 26, 68 to 88, 97 to 117, 138 to 158, 164 to 184, and 189 to 209; these read FASFITPTMMGFPIVVAIIMF, WTLMIVSLIMFIGSTNLLGLL, QLSMNLSMAIPLWAGAVITGF, IPMLIIIETISLFIQPMALAV, ITAGHLLMHLIGGATLVLMNI, and ATITFIILLLLTILEFAVALI.

Belongs to the ATPase A chain family. Component of the ATP synthase complex composed at least of ATP5F1A/subunit alpha, ATP5F1B/subunit beta, ATP5MC1/subunit c (homooctomer), MT-ATP6/subunit a, MT-ATP8/subunit 8, ATP5ME/subunit e, ATP5MF/subunit f, ATP5MG/subunit g, ATP5MK/subunit k, ATP5MJ/subunit j, ATP5F1C/subunit gamma, ATP5F1D/subunit delta, ATP5F1E/subunit epsilon, ATP5PF/subunit F6, ATP5PB/subunit b, ATP5PD/subunit d, ATP5PO/subunit OSCP. ATP synthase complex consists of a soluble F(1) head domain (subunits alpha(3) and beta(3)) - the catalytic core - and a membrane F(0) domain - the membrane proton channel (subunits c, a, 8, e, f, g, k and j). These two domains are linked by a central stalk (subunits gamma, delta, and epsilon) rotating inside the F1 region and a stationary peripheral stalk (subunits F6, b, d, and OSCP). Interacts with DNAJC30; interaction is direct.

The protein resides in the mitochondrion inner membrane. The enzyme catalyses H(+)(in) = H(+)(out). Functionally, subunit a, of the mitochondrial membrane ATP synthase complex (F(1)F(0) ATP synthase or Complex V) that produces ATP from ADP in the presence of a proton gradient across the membrane which is generated by electron transport complexes of the respiratory chain. ATP synthase complex consist of a soluble F(1) head domain - the catalytic core - and a membrane F(1) domain - the membrane proton channel. These two domains are linked by a central stalk rotating inside the F(1) region and a stationary peripheral stalk. During catalysis, ATP synthesis in the catalytic domain of F(1) is coupled via a rotary mechanism of the central stalk subunits to proton translocation. With the subunit c (ATP5MC1), forms the proton-conducting channel in the F(0) domain, that contains two crucial half-channels (inlet and outlet) that facilitate proton movement from the mitochondrial intermembrane space (IMS) into the matrix. Protons are taken up via the inlet half-channel and released through the outlet half-channel, following a Grotthuss mechanism. The chain is ATP synthase F(0) complex subunit a from Mus musculus (Mouse).